The sequence spans 369 residues: Queuine tRNA-ribosyltransferase (369 aa).

Asp89 (proton acceptor) is an active-site residue. Residues 89–93 (DSGGF), Asp143, Gln187, and Gly214 contribute to the substrate site. Positions 245–251 (GVGTPED) are RNA binding. Asp264 serves as the catalytic Nucleophile. The segment at 269-273 (TRNAR) is RNA binding; important for wobble base 34 recognition. Residues Cys302, Cys304, Cys307, and His333 each coordinate Zn(2+).

It belongs to the queuine tRNA-ribosyltransferase family. As to quaternary structure, homodimer. Within each dimer, one monomer is responsible for RNA recognition and catalysis, while the other monomer binds to the replacement base PreQ1. Zn(2+) serves as cofactor.

It catalyses the reaction 7-aminomethyl-7-carbaguanine + guanosine(34) in tRNA = 7-aminomethyl-7-carbaguanosine(34) in tRNA + guanine. It functions in the pathway tRNA modification; tRNA-queuosine biosynthesis. Functionally, catalyzes the base-exchange of a guanine (G) residue with the queuine precursor 7-aminomethyl-7-deazaguanine (PreQ1) at position 34 (anticodon wobble position) in tRNAs with GU(N) anticodons (tRNA-Asp, -Asn, -His and -Tyr). Catalysis occurs through a double-displacement mechanism. The nucleophile active site attacks the C1' of nucleotide 34 to detach the guanine base from the RNA, forming a covalent enzyme-RNA intermediate. The proton acceptor active site deprotonates the incoming PreQ1, allowing a nucleophilic attack on the C1' of the ribose to form the product. After dissociation, two additional enzymatic reactions on the tRNA convert PreQ1 to queuine (Q), resulting in the hypermodified nucleoside queuosine (7-(((4,5-cis-dihydroxy-2-cyclopenten-1-yl)amino)methyl)-7-deazaguanosine). This is Queuine tRNA-ribosyltransferase from Dechloromonas aromatica (strain RCB).